A 327-amino-acid chain; its full sequence is Malate dehydrogenase 1 (327 aa).

Residue 12 to 18 participates in NAD(+) binding; that stretch reads GAAGQIA. Residues R93 and R99 each contribute to the substrate site. Residues N106, Q113, and 130 to 132 contribute to the NAD(+) site; that span reads VGN. The substrate site is built by N132 and R163. The active-site Proton acceptor is the H188.

It belongs to the LDH/MDH superfamily. MDH type 2 family.

It carries out the reaction (S)-malate + NAD(+) = oxaloacetate + NADH + H(+). Its function is as follows. Catalyzes the reversible oxidation of malate to oxaloacetate. This is Malate dehydrogenase 1 from Burkholderia thailandensis (strain ATCC 700388 / DSM 13276 / CCUG 48851 / CIP 106301 / E264).